Consider the following 256-residue polypeptide: Hemolymph lipopolysaccharide-binding protein (256 aa).

Residues 1–21 (MMNTRALLPLSVLLMATLCLC) form the signal peptide. Residues 22-33 (ELPIPILQRFVR) constitute a propeptide that is removed on maturation. A glycan (N-linked (GlcNAc...) asparagine) is linked at asparagine 56. One can recognise a C-type lectin domain in the interval 146-256 (IICQQEGGHL…KLPFVCEVEL (111 aa)). Cystine bridges form between cysteine 148–cysteine 252 and cysteine 230–cysteine 244.

Hemolymph.

Its subcellular location is the secreted. In terms of biological role, participates probably in the elimination of foreign substances invading the insect abdominal cavity, and in trapping intracellular symbionts, when they leak from the mycetomes into the hemolymph. The sequence is that of Hemolymph lipopolysaccharide-binding protein from Periplaneta americana (American cockroach).